Here is a 222-residue protein sequence, read N- to C-terminus: 2-C-methyl-D-erythritol 2,4-cyclodiphosphate synthase, chloroplastic (222 aa).

The transit peptide at methionine 1 to alanine 43 directs the protein to the chloroplast. 2 residues coordinate a divalent metal cation: aspartate 73 and histidine 75. Residues aspartate 73–histidine 75, histidine 99–serine 100, aspartate 103–aspartate 111, aspartate 121–glycine 123, phenylalanine 126–aspartate 130, aspartate 130, leucine 165–serine 171, and alanine 196–glutamate 200 contribute to the substrate site. Histidine 107 lines the a divalent metal cation pocket.

Belongs to the IspF family. As to quaternary structure, homotrimer. A divalent metal cation is required as a cofactor. In terms of tissue distribution, expressed in roots, leaves, stems, leaf sheaths and young panicles.

The protein localises to the plastid. The protein resides in the chloroplast. It catalyses the reaction 4-CDP-2-C-methyl-D-erythritol 2-phosphate = 2-C-methyl-D-erythritol 2,4-cyclic diphosphate + CMP. Its pathway is isoprenoid biosynthesis; isopentenyl diphosphate biosynthesis via DXP pathway; isopentenyl diphosphate from 1-deoxy-D-xylulose 5-phosphate: step 4/6. Its function is as follows. Enzyme of the plastid non-mevalonate pathway for isoprenoid biosynthesis that converts 4-diphosphocytidyl-2C-methyl-D-erythritol 2-phosphate into 2C-methyl-D-erythritol 2,4-cyclodiphosphate and CMP. Is essential for chloroplast development. This Oryza sativa subsp. japonica (Rice) protein is 2-C-methyl-D-erythritol 2,4-cyclodiphosphate synthase, chloroplastic.